Reading from the N-terminus, the 315-residue chain is 4-diphosphocytidyl-2-C-methyl-D-erythritol kinase (315 aa).

Lys26 is a catalytic residue. 111–121 (PLAGGLAGGSA) lines the ATP pocket. The active site involves Asp153.

Belongs to the GHMP kinase family. IspE subfamily.

The enzyme catalyses 4-CDP-2-C-methyl-D-erythritol + ATP = 4-CDP-2-C-methyl-D-erythritol 2-phosphate + ADP + H(+). Its pathway is isoprenoid biosynthesis; isopentenyl diphosphate biosynthesis via DXP pathway; isopentenyl diphosphate from 1-deoxy-D-xylulose 5-phosphate: step 3/6. Functionally, catalyzes the phosphorylation of the position 2 hydroxy group of 4-diphosphocytidyl-2C-methyl-D-erythritol. This is 4-diphosphocytidyl-2-C-methyl-D-erythritol kinase from Salinispora arenicola (strain CNS-205).